The chain runs to 356 residues: Solute carrier family 25 member 3 (356 aa).

Residues 1–44 (MFSSVAHLARANPFNAPHLQLVHDVSGPRSPPGPPRRSRHLAAA) constitute a mitochondrion transit peptide. The Mitochondrial intermembrane portion of the chain corresponds to 45–57 (AVEGYSCEFGSMK). 3 Solcar repeats span residues 57-141 (KYYA…FKAL), 154-238 (WRTS…TVEA), and 255-333 (EQLV…VKVY). Residues 58-80 (YYALCGFGGVLSCGLTHTAVVPL) form a helical membrane-spanning segment. The Mitochondrial matrix segment spans residues 81-115 (DLVKCRMQVDPQKYKGIFNGFSITLKEDGVRGLAK). Lys-93 carries the post-translational modification N6-acetyllysine. N6-methyllysine is present on Lys-106. A helical membrane pass occupies residues 116 to 135 (GWAPTLIGYSMQGLCKFGFY). At 136–155 (EVFKALYSNILGEENTYLWR) the chain is on the mitochondrial intermembrane side. Residues 156–177 (TSLYLAASASAEFFADIALAPM) traverse the membrane as a helical segment. At 178–212 (EAAKVRIQTQPGYANTLREAVPKMYKEEGLNAFYK) the chain is on the mitochondrial matrix side. Tyr-190 is modified (phosphotyrosine). Position 203 is an N6-acetyllysine (Lys-203). The chain crosses the membrane as a helical span at residues 213 to 232 (GVAPVWMRQIPYTMMKFACF). Residues 233-255 (ERTVEALYKFVVPKPRSECTKAE) lie on the Mitochondrial intermembrane side of the membrane. The chain crosses the membrane as a helical span at residues 256–278 (QLVVTFVAGYIAGVFCAIVSHPA). The Mitochondrial matrix portion of the chain corresponds to 279 to 308 (DSVVSVLNKEKGSTASQVLQRLGFRGVWKG). A helical transmembrane segment spans residues 309–327 (LFARIIMIGTLTALQWFIY). Residues 328 to 356 (DSVKVYFRLPRPPPPEMPESLKKKLGLTE) lie on the Mitochondrial intermembrane side of the membrane.

Belongs to the mitochondrial carrier (TC 2.A.29) family. In terms of assembly, interacts with PPIF; the interaction is impaired by CsA.

The protein localises to the mitochondrion inner membrane. The catalysed reaction is phosphate(in) + H(+)(in) = phosphate(out) + H(+)(out). In terms of biological role, inorganic ion transporter that transports phosphate or copper ions across the mitochondrial inner membrane into the matrix compartment. Mediates proton-coupled symport of phosphate ions necessary for mitochondrial oxidative phosphorylation of ADP to ATP. Transports copper ions probably in the form of anionic copper(I) complexes to maintain mitochondrial matrix copper pool and to supply copper for cytochrome C oxidase complex assembly. May also play a role in regulation of the mitochondrial permeability transition pore (mPTP). The chain is Solute carrier family 25 member 3 from Rattus norvegicus (Rat).